A 243-amino-acid chain; its full sequence is Small ribosomal subunit protein uS3 (243 aa).

Residues 39–110 (IRKFIHKKYG…QVRINVVEVE (72 aa)) form the KH type-2 domain. The segment at 217–243 (QQLPVGATPRRRAGRRPQQFEDRSNEG) is disordered. A compositionally biased stretch (basic and acidic residues) spans 234 to 243 (QQFEDRSNEG).

It belongs to the universal ribosomal protein uS3 family. Part of the 30S ribosomal subunit. Forms a tight complex with proteins S10 and S14.

Its function is as follows. Binds the lower part of the 30S subunit head. Binds mRNA in the 70S ribosome, positioning it for translation. This Synechococcus sp. (strain WH7803) protein is Small ribosomal subunit protein uS3.